Here is a 374-residue protein sequence, read N- to C-terminus: Patatin-2-Kuras 1 (374 aa).

The N-terminal stretch at 1–11 (MILATTGSTCA) is a signal peptide. The region spanning 20–217 (LSIDGGGIKG…TVGDPALLSL (198 aa)) is the PNPLA domain. Positions 24–29 (GGGIKG) match the GXGXXG motif. The short motif at 63-67 (GTSTG) is the GXSXG element. Serine 65 (nucleophile) is an active-site residue. Asparagine 103 carries an N-linked (GlcNAc...) asparagine glycan. Aspartate 203 acts as the Proton acceptor in catalysis. A DGA/G motif is present at residues 203 to 205 (DGA). The stretch at 309 to 372 (ENALTGTTTE…DRKKLRANKA (64 aa)) forms a coiled coil.

The protein belongs to the patatin family. As to expression, tuber.

It is found in the vacuole. Functionally, probable lipolytic acyl hydrolase (LAH), an activity which is thought to be involved in the response of tubers to pathogens. The polypeptide is Patatin-2-Kuras 1 (pat2-k1) (Solanum tuberosum (Potato)).